A 417-amino-acid polypeptide reads, in one-letter code: Serine hydroxymethyltransferase (417 aa).

Residues leucine 117 and glycine 121–leucine 123 contribute to the (6S)-5,6,7,8-tetrahydrofolate site. The residue at position 226 (lysine 226) is an N6-(pyridoxal phosphate)lysine.

The protein belongs to the SHMT family. In terms of assembly, homodimer. It depends on pyridoxal 5'-phosphate as a cofactor.

The protein resides in the cytoplasm. It carries out the reaction (6R)-5,10-methylene-5,6,7,8-tetrahydrofolate + glycine + H2O = (6S)-5,6,7,8-tetrahydrofolate + L-serine. The protein operates within one-carbon metabolism; tetrahydrofolate interconversion. Its pathway is amino-acid biosynthesis; glycine biosynthesis; glycine from L-serine: step 1/1. Catalyzes the reversible interconversion of serine and glycine with tetrahydrofolate (THF) serving as the one-carbon carrier. This reaction serves as the major source of one-carbon groups required for the biosynthesis of purines, thymidylate, methionine, and other important biomolecules. Also exhibits THF-independent aldolase activity toward beta-hydroxyamino acids, producing glycine and aldehydes, via a retro-aldol mechanism. In Syntrophus aciditrophicus (strain SB), this protein is Serine hydroxymethyltransferase.